The following is a 388-amino-acid chain: Succinyl-diaminopimelate desuccinylase (388 aa).

Zn(2+) is bound at residue H75. D77 is an active-site residue. Residue D108 participates in Zn(2+) binding. Catalysis depends on E142, which acts as the Proton acceptor. Zn(2+)-binding residues include E143, E171, and H361.

Belongs to the peptidase M20A family. DapE subfamily. As to quaternary structure, homodimer. Zn(2+) serves as cofactor. Requires Co(2+) as cofactor.

The enzyme catalyses N-succinyl-(2S,6S)-2,6-diaminopimelate + H2O = (2S,6S)-2,6-diaminopimelate + succinate. It participates in amino-acid biosynthesis; L-lysine biosynthesis via DAP pathway; LL-2,6-diaminopimelate from (S)-tetrahydrodipicolinate (succinylase route): step 3/3. In terms of biological role, catalyzes the hydrolysis of N-succinyl-L,L-diaminopimelic acid (SDAP), forming succinate and LL-2,6-diaminopimelate (DAP), an intermediate involved in the bacterial biosynthesis of lysine and meso-diaminopimelic acid, an essential component of bacterial cell walls. This chain is Succinyl-diaminopimelate desuccinylase, found in Methylocella silvestris (strain DSM 15510 / CIP 108128 / LMG 27833 / NCIMB 13906 / BL2).